A 162-amino-acid polypeptide reads, in one-letter code: Caveolin-2 (162 aa).

Over 1–86 (MGLETEKADV…FEISKYVMYK (86 aa)) the chain is Cytoplasmic. Tyrosine 19 is subject to Phosphotyrosine; by SRC. Phosphoserine occurs at positions 20 and 23. Tyrosine 27 is subject to Phosphotyrosine. Residue serine 36 is modified to Phosphoserine. An intramembrane region (helical) is located at residues 87 to 107 (FLTVFLAIPLAFIAGILFATL). The Cytoplasmic segment spans residues 108–162 (SCLHIWILMPFVKTCLMVLPSVQTIWKSVTDVVIGPLCTSVGRSFSSVSMQLSHD).

Belongs to the caveolin family. As to quaternary structure, monomer or homodimer. Interacts with CAV1; the interaction forms a stable heterooligomeric complex that is required for targeting to lipid rafts and for caveolae formation. Tyrosine phosphorylated forms do not form heterooligomers with the Tyr-19-phosphorylated form existing as a monomer or dimer, and the Tyr-27-form as a monomer only. Interacts (tyrosine phosphorylated form) with the SH2 domain-containing proteins, RASA1, NCK1 and SRC. Interacts (tyrosine phosphorylated form) with INSR, the interaction (Tyr-27-phosphorylated form) is increased on insulin stimulation. Interacts (Tyr-19 phosphorylated form) with MAPK1 (phosphorylated form); the interaction, promoted by insulin, leads to nuclear location and MAPK1 activation. Interacts with STAT3; the interaction is increased on insulin-induced tyrosine phosphorylation leading to STAT activation. Phosphorylated on serine and tyrosine residues. CAV1 promotes phosphorylation on Ser-23 which then targets the complex to the plasma membrane, lipid rafts and caveolae. Phosphorylation on Ser-36 appears to modulate mitosis in endothelial cells. Phosphorylation on both Tyr-19 and Tyr-27 is required for insulin-induced 'Ser-727' phosphorylation of STAT3 and its activation. Phosphorylation on Tyr-19 is required for insulin-induced phosphorylation of MAPK1 and DNA binding of STAT3. Tyrosine phosphorylation is induced by both EGF and insulin.

It localises to the nucleus. The protein resides in the cytoplasm. It is found in the golgi apparatus membrane. Its subcellular location is the cell membrane. The protein localises to the membrane. It localises to the caveola. May act as a scaffolding protein within caveolar membranes. Interacts directly with G-protein alpha subunits and can functionally regulate their activity. Acts as an accessory protein in conjunction with CAV1 in targeting to lipid rafts and driving caveolae formation. The Ser-36 phosphorylated form has a role in modulating mitosis in endothelial cells. Positive regulator of cellular mitogenesis of the MAPK signaling pathway. Required for the insulin-stimulated nuclear translocation and activation of MAPK1 and STAT3, and the subsequent regulation of cell cycle progression. In Mus musculus (Mouse), this protein is Caveolin-2 (Cav2).